A 150-amino-acid chain; its full sequence is Endoribonuclease YbeY (150 aa).

Positions 102, 106, and 112 each coordinate Zn(2+).

This sequence belongs to the endoribonuclease YbeY family. The cofactor is Zn(2+).

It is found in the cytoplasm. In terms of biological role, single strand-specific metallo-endoribonuclease involved in late-stage 70S ribosome quality control and in maturation of the 3' terminus of the 16S rRNA. The polypeptide is Endoribonuclease YbeY (Thermotoga petrophila (strain ATCC BAA-488 / DSM 13995 / JCM 10881 / RKU-1)).